A 20-amino-acid chain; its full sequence is Trypsin inhibitor DE-3 (20 aa).

This sequence belongs to the protease inhibitor I3 (leguminous Kunitz-type inhibitor) family.

Inhibition of trypsin. The sequence is that of Trypsin inhibitor DE-3 from Erythrina corallodendron (Coral tree).